Reading from the N-terminus, the 805-residue chain is Phosphoinositide 3-kinase adapter protein 1 (805 aa).

Positions 8–145 (RGCDILIVYS…AVKKAISEDS (138 aa)) constitute a TIR domain. Residues 10 to 144 (CDILIVYSPD…AAVKKAISED (135 aa)) are necessary and sufficient to mediate inhibition of NF-kappa-B downstream of activated TLRs; may mediate interaction with MYD88 and TIRAP. Residues 145–165 (SGCDSVTDTEPEDEKVVSYSK) are disordered. The 137-residue stretch at 181 to 317 (VQPDRIRCGA…NIPASGLHLF (137 aa)) folds into the DBB domain. A Phosphotyrosine modification is found at Y263. Phosphotyrosine; by SYK is present on residues Y419, Y444, and Y459. Y513 bears the Phosphotyrosine; by ABL1 mark. Positions 527 to 547 (ASRPPVPVPRPETTAPGAHQL) are disordered. Phosphotyrosine; by ABL1 occurs at positions 553 and 570. The segment at 571–590 (VSSESIRKGPPVRPWRDRPQ) is disordered. Y594 carries the post-translational modification Phosphotyrosine; by ABL1. The residue at position 642 (S642) is a Phosphoserine. Positions 645–667 (FQQENLKRLRDSITRRQREKQKS) form a coiled coil. A compositionally biased stretch (basic and acidic residues) spans 654–672 (RDSITRRQREKQKSGKQTD). The segment at 654–679 (RDSITRRQREKQKSGKQTDLEITVPI) is disordered. Y694 bears the Phosphotyrosine; by ABL1 mark. Positions 697–805 (GPRKSVIPPR…PPPPVPPRGR (109 aa)) are disordered. The segment covering 707–716 (TELRRGDWKT) has biased composition (basic and acidic residues). Residues 717–740 (DSTSSTASSTSNRSSTRSLLSVSS) show a composition bias toward low complexity. A Phosphoserine modification is found at S718. A compositionally biased stretch (pro residues) spans 795–805 (HPPPPVPPRGR).

As to quaternary structure, homooligomer. Interacts (phosphorylated on tyrosine residues within YXXM motifs) with PIK3R1 (via SH2 domain); required for BCR- and TLR-mediated activation of phosphoinositide 3-kinase. Interacts (via polyproline C-terminal region) with ABI1 (via SH3 domain); the interaction promotes phosphorylation of PIK3AP1 by ABL1. May interact with MYD88 and TIRAP. In terms of processing, constitutively phosphorylated. Phosphorylated on tyrosine residues in C-terminal region by ABL1. Phosphorylated on tyrosine residues within the YXXM motifs by BTK and SYK. Isoform 1 and isoform 2 are phosphorylated on tyrosine residues, most likely within the YXXM motifs, via CD19 activation. Toll-like receptor activation induces appearance of a phosphorylated form associated with membranes. As to expression, expressed in natural killer (NK) cells.

The protein localises to the cytoplasm. It localises to the cell membrane. In terms of biological role, signaling adapter that contributes to B-cell development by linking B-cell receptor (BCR) signaling to the phosphoinositide 3-kinase (PI3K)-Akt signaling pathway. Has a complementary role to the BCR coreceptor CD19, coupling BCR and PI3K activation by providing a docking site for the PI3K subunit PIK3R1. Alternatively, links Toll-like receptor (TLR) signaling to PI3K activation, a process preventing excessive inflammatory cytokine production. Also involved in the activation of PI3K in natural killer cells. May be involved in the survival of mature B-cells via activation of REL. The sequence is that of Phosphoinositide 3-kinase adapter protein 1 (PIK3AP1) from Homo sapiens (Human).